The following is a 195-amino-acid chain: dCTP deaminase, dUMP-forming (195 aa).

Residues Arg-105–Arg-110, Asp-123, Thr-131–Glu-133, Gln-152, Tyr-166, Lys-173, and Gln-177 contribute to the dCTP site. Glu-133 (proton donor/acceptor) is an active-site residue. The disordered stretch occupies residues Pro-161–Gln-195. The span at Pro-165 to Asp-176 shows a compositional bias: basic and acidic residues. The segment covering Ile-185–Gln-195 has biased composition (basic and acidic residues).

Belongs to the dCTP deaminase family. As to quaternary structure, homotrimer.

The catalysed reaction is dCTP + 2 H2O = dUMP + NH4(+) + diphosphate. Its pathway is pyrimidine metabolism; dUMP biosynthesis; dUMP from dCTP: step 1/1. Bifunctional enzyme that catalyzes both the deamination of dCTP to dUTP and the hydrolysis of dUTP to dUMP without releasing the toxic dUTP intermediate. In Halobacterium salinarum (strain ATCC 700922 / JCM 11081 / NRC-1) (Halobacterium halobium), this protein is dCTP deaminase, dUMP-forming.